Consider the following 510-residue polypeptide: Polyadenylation factor subunit 2 (510 aa).

WD repeat units lie at residues 26 to 65 (KSKK…FETV), 91 to 130 (AHHD…ADTV), 133 to 172 (GHNW…CLTT), 175 to 215 (SHKN…DICI), 218 to 258 (GHEK…LPSG), and 288 to 327 (AHSA…ETSY).

It is found in the nucleus. Functionally, required for 3'-end cleavage and polyadenylation of pre-mRNAs. Also involved in chromosome segregation where it has a role in chromosome attachment to the mitotic spindle. The protein is Polyadenylation factor subunit 2 (pfs2) of Aspergillus fumigatus (strain ATCC MYA-4609 / CBS 101355 / FGSC A1100 / Af293) (Neosartorya fumigata).